The sequence spans 1134 residues: MWLKPEEVLLKNALKLWVTQKSSCYFVLQRRRGHGEGGGRLTGRLVGALDAVLDSSARVAPFRILLQVPGSQVYSPIACGATLEEINRHWDWLEQNLLHTLSVFDNKDDIASFVKGKVKALIAEETSSRLAEQEEEPEKFREALVKFEARFNFPEAEKLVTYYSCCCWKGRVPRQGWLYLSINHLCFYSFFLGKELKLVIPWVDIQKLERTSNVFLTDTIRITTQNKERDFSTFLNLDEVFKIMEQLADVTLRRLLDNEVFDLDPDLQEPSQITKRDLEARAQNEFFRAFFRLPREEKLHAVADCSLWTPFSRCHTAGRIFSSDSYICFASREDGCCNVVLPLREVVSIEKMEDTSLLPNPIIVSIRSKMAFQFIELKDRENLVEGLLLRLKQVHANHPVHYETSPSDDDMASPVFYSASICTDKFGDLEMVASQSSEEREEKRPLPHPEPLTAVFQQSGSQSPDSRLSREQIKISLWNDHFVEYGRTVCMFRTEKIRKLVAMGIPESLRGRLWLLFSDAVTDLASHPGYYGNLVEQSLGRCCLVTEEIERDLHRSLPEHPAFQNETGIAALRRVLTAYAHRNPKIGYCQSMNILTSVLLLYAKEEEAFWLLVAVCERMLPDYFNHRVIGAQVDQSVFEELIKEQLPELAEHMSDLSALASISLSWFLTLFLSIMPLESAVHVVDCFFYDGIKAIFQLGLAVLEANAEELCSSKDDGQALMVLSRFLDHIKNEDSPGPPIGSHHAFFSDDQEPYPVTDIADLIRDSYEKFGNQSVEQIEHLRCKHRIRVLQGHEDTTKQNVLRVVIPEVSILPEDLEELYDLFKRAHMMSCYWEHHRPMALRHDPSRPYAEQYRIDARQFAHLFQLVSPWTCGVHTEILAERLFRLLDDNMDQLIEFKAFTSCLDIMYNGEMNEKIKLLYRLHIPPALTENDRDSQSPLKNPLLSTSRPLVLGKPNGDTIDYQKQLKQMIKDLAKEKDKMEKELPKMSQREFIQFCKTLYSMFHEDPEENDLYQAIATVTTLLLQIGEVGQRGSSSGSCSQECEEPQASAPPEQDSVFAEAGKSPQAFPETEGDWTVSLEHILASLLTEQSLVNFFEKPLNIKSKLENAKLNQYSLKVLEMSHPPQAELKLNDL.

GRAM domains follow at residues 145-212 (VKFE…ERTS) and 285-353 (EFFR…EKME). The segment at 433 to 466 (ASQSSEEREEKRPLPHPEPLTAVFQQSGSQSPDS) is disordered. The span at 437–447 (SEEREEKRPLP) shows a compositional bias: basic and acidic residues. Positions 455 to 466 (VFQQSGSQSPDS) are enriched in polar residues. The Rab-GAP TBC domain occupies 504–691 (GIPESLRGRL…HVVDCFFYDG (188 aa)). Residues 1034–1070 (SSSGSCSQECEEPQASAPPEQDSVFAEAGKSPQAFPE) are disordered.

Its function is as follows. May act as a GTPase-activating protein for Rab family protein(s). The polypeptide is TBC1 domain family member 8 (Tbc1d8) (Mus musculus (Mouse)).